The following is an 83-amino-acid chain: UPF0297 protein CKR_1221 (83 aa).

Belongs to the UPF0297 family.

This is UPF0297 protein CKR_1221 from Clostridium kluyveri (strain NBRC 12016).